We begin with the raw amino-acid sequence, 387 residues long: 3-ketoacyl-CoA thiolase (387 aa).

Cys-91 serves as the catalytic Acyl-thioester intermediate. Residues His-343 and Cys-373 each act as proton acceptor in the active site.

This sequence belongs to the thiolase-like superfamily. Thiolase family. As to quaternary structure, heterotetramer of two alpha chains (FadB) and two beta chains (FadA).

It localises to the cytoplasm. The catalysed reaction is an acyl-CoA + acetyl-CoA = a 3-oxoacyl-CoA + CoA. It participates in lipid metabolism; fatty acid beta-oxidation. Catalyzes the final step of fatty acid oxidation in which acetyl-CoA is released and the CoA ester of a fatty acid two carbons shorter is formed. This chain is 3-ketoacyl-CoA thiolase, found in Vibrio vulnificus (strain YJ016).